Reading from the N-terminus, the 379-residue chain is UDP-4-amino-4-deoxy-L-arabinose--oxoglutarate aminotransferase (379 aa).

Lys182 carries the post-translational modification N6-(pyridoxal phosphate)lysine.

Belongs to the DegT/DnrJ/EryC1 family. ArnB subfamily. Homodimer. The cofactor is pyridoxal 5'-phosphate.

It carries out the reaction UDP-4-amino-4-deoxy-beta-L-arabinose + 2-oxoglutarate = UDP-beta-L-threo-pentopyranos-4-ulose + L-glutamate. It functions in the pathway nucleotide-sugar biosynthesis; UDP-4-deoxy-4-formamido-beta-L-arabinose biosynthesis; UDP-4-deoxy-4-formamido-beta-L-arabinose from UDP-alpha-D-glucuronate: step 2/3. Its pathway is bacterial outer membrane biogenesis; lipopolysaccharide biosynthesis. In terms of biological role, catalyzes the conversion of UDP-4-keto-arabinose (UDP-Ara4O) to UDP-4-amino-4-deoxy-L-arabinose (UDP-L-Ara4N). The modified arabinose is attached to lipid A and is required for resistance to polymyxin and cationic antimicrobial peptides. The polypeptide is UDP-4-amino-4-deoxy-L-arabinose--oxoglutarate aminotransferase (Sodalis glossinidius (strain morsitans)).